We begin with the raw amino-acid sequence, 263 residues long: Expansin-like A3 (263 aa).

A signal peptide spans 1-20; the sequence is MRSFLYLIVVIFLFSSSVNA. Residues 41–147 enclose the Expansin-like EG45 domain; it reads SGACAYGPMA…QRVPCNYGKR (107 aa). N-linked (GlcNAc...) asparagine glycans are attached at residues Asn99 and Asn102. In terms of domain architecture, Expansin-like CBD spans 161 to 243; it reads NYLAIKLLYQ…NWNSGRIYDA (83 aa).

This sequence belongs to the expansin family. Expansin-like A subfamily.

Its subcellular location is the secreted. The protein is Expansin-like A3 (EXLA3) of Arabidopsis thaliana (Mouse-ear cress).